The following is a 272-amino-acid chain: Alcohol dehydrogenase-related 31 kDa protein (272 aa).

11–34 (YVADCGGIALETSKVLMTKNIAKL) is an NAD(+) binding site. S139 lines the substrate pocket. Catalysis depends on Y152, which acts as the Proton acceptor.

The protein belongs to the short-chain dehydrogenases/reductases (SDR) family.

The polypeptide is Alcohol dehydrogenase-related 31 kDa protein (Adhr) (Drosophila mauritiana (Fruit fly)).